A 147-amino-acid polypeptide reads, in one-letter code: Secreted hemophore CSA2 (147 aa).

Positions 1–20 (MKFSTILAIPFAIAFANAAA) are cleaved as a signal peptide. One can recognise a CFEM domain in the interval 34–145 (NPYTIYPPVP…SALDAAATAT (112 aa)). 4 disulfide bridges follow: Cys-62/Cys-102, Cys-66/Cys-97, Cys-76/Cys-83, and Cys-85/Cys-118. Residue Asp-80 participates in heme binding.

It belongs to the RBT5 family. As to quaternary structure, homodimer. The possibility of a transient honotrimer assembly of the holo protein is not ruled out.

Its subcellular location is the secreted. Functionally, secreted heme-binding protein involved in the utilization of iron from human hemoglobin during hyphal growth. May also play a role in non-hemoglobin iron utilization. Heme transfer occurs between PGA7, RBT5 and CSA2 supporting a model in which the 3 CFEM proteins cooperate in a heme-acquisition system and form a cross-cell wall heme-transfer cascade. The ability to acquire iron from host tissues is a major virulence factor of pathogenic microorganisms. This is Secreted hemophore CSA2 (CSA2) from Candida albicans (strain SC5314 / ATCC MYA-2876) (Yeast).